The sequence spans 94 residues: Conotoxin Im026 (94 aa).

Positions 1–24 (MRLTTMHSVILMLLLVFAFDNVDG) are cleaved as a signal peptide. Residues 25–59 (DEPGQTARDVDNRNFMSILRSEGKPVHFLRAIKKR) constitute a propeptide that is removed on maturation.

Post-translationally, contains 4 disulfide bonds. As to expression, expressed by the venom duct.

The protein resides in the secreted. Probable neurotoxin. The protein is Conotoxin Im026 of Conus imperialis (Imperial cone).